The chain runs to 809 residues: Penicillin-binding protein 1A (809 aa).

Over 1–34 (MSDNTKTNSRNKSVKRTKKVKKKKKFGFFKKLFT) the chain is Cytoplasmic. Residues 35-55 (ILFCLFILLSVAASGVIFAIV) traverse the membrane as a helical; Signal-anchor for type II membrane protein segment. At 56–809 (KTSPNLDING…PNNNTTNTNK (754 aa)) the chain is on the extracellular side. Residues 74–251 (SQLYDDNNNP…PSAYYPFSQN (178 aa)) are transglycosylase. The Proton donor; for transglycosylase activity role is filled by Glu-113. A transpeptidase region spans residues 381 to 664 (AAATLFDYHT…VAEIWGEIMK (284 aa)). Ser-422 serves as the catalytic Acyl-ester intermediate; for transpeptidase activity. The disordered stretch occupies residues 694-809 (SPSNLSGDDS…PNNNTTNTNK (116 aa)).

The protein in the N-terminal section; belongs to the glycosyltransferase 51 family. It in the C-terminal section; belongs to the transpeptidase family.

It localises to the cell membrane. The enzyme catalyses [GlcNAc-(1-&gt;4)-Mur2Ac(oyl-L-Ala-gamma-D-Glu-L-Lys-D-Ala-D-Ala)](n)-di-trans,octa-cis-undecaprenyl diphosphate + beta-D-GlcNAc-(1-&gt;4)-Mur2Ac(oyl-L-Ala-gamma-D-Glu-L-Lys-D-Ala-D-Ala)-di-trans,octa-cis-undecaprenyl diphosphate = [GlcNAc-(1-&gt;4)-Mur2Ac(oyl-L-Ala-gamma-D-Glu-L-Lys-D-Ala-D-Ala)](n+1)-di-trans,octa-cis-undecaprenyl diphosphate + di-trans,octa-cis-undecaprenyl diphosphate + H(+). The catalysed reaction is Preferential cleavage: (Ac)2-L-Lys-D-Ala-|-D-Ala. Also transpeptidation of peptidyl-alanyl moieties that are N-acyl substituents of D-alanine.. Its pathway is cell wall biogenesis; peptidoglycan biosynthesis. Cell wall formation. Synthesis of cross-linked peptidoglycan from the lipid intermediates. The enzyme has a penicillin-insensitive transglycosylase N-terminal domain (formation of linear glycan strands) and a penicillin-sensitive transpeptidase C-terminal domain (cross-linking of the peptide subunits). The chain is Penicillin-binding protein 1A (pbpA) from Clostridium acetobutylicum (strain ATCC 824 / DSM 792 / JCM 1419 / IAM 19013 / LMG 5710 / NBRC 13948 / NRRL B-527 / VKM B-1787 / 2291 / W).